The sequence spans 423 residues: Imidazolonepropionase (423 aa).

Fe(3+) contacts are provided by His-91 and His-93. 2 residues coordinate Zn(2+): His-91 and His-93. 3 residues coordinate 4-imidazolone-5-propanoate: Arg-100, Tyr-163, and His-193. Position 163 (Tyr-163) interacts with N-formimidoyl-L-glutamate. His-257 contributes to the Fe(3+) binding site. His-257 provides a ligand contact to Zn(2+). Gln-260 is a binding site for 4-imidazolone-5-propanoate. Asp-331 contacts Fe(3+). Asp-331 is a Zn(2+) binding site. N-formimidoyl-L-glutamate contacts are provided by Asn-333 and Gly-335. Thr-336 contributes to the 4-imidazolone-5-propanoate binding site.

It belongs to the metallo-dependent hydrolases superfamily. HutI family. It depends on Zn(2+) as a cofactor. Requires Fe(3+) as cofactor.

Its subcellular location is the cytoplasm. The catalysed reaction is 4-imidazolone-5-propanoate + H2O = N-formimidoyl-L-glutamate. It participates in amino-acid degradation; L-histidine degradation into L-glutamate; N-formimidoyl-L-glutamate from L-histidine: step 3/3. Catalyzes the hydrolytic cleavage of the carbon-nitrogen bond in imidazolone-5-propanoate to yield N-formimidoyl-L-glutamate. It is the third step in the universal histidine degradation pathway. This is Imidazolonepropionase from Bdellovibrio bacteriovorus (strain ATCC 15356 / DSM 50701 / NCIMB 9529 / HD100).